The primary structure comprises 173 residues: MHVDIVPVGEVSAQVKREASDGLRSVYDCEVSMHEPQSIPAGAYDGDRDQYRAEEFIDLARRVGSGGKNIAITPKDLFYRRRNYVFGLAYLGGSGSVISTYRLQTSSDGGFSNRSAGEIFSQRVRKEVVHEVGHTLGLEHCDNKRCVMNFSPTVRQVDVKEVSLCGSCQRNVL.

Histidine 130 is a binding site for Zn(2+). The active-site Proton acceptor is the glutamate 131. Positions 134, 140, 141, 146, 165, and 168 each coordinate Zn(2+).

Belongs to the peptidase M54 family. In terms of assembly, monomer. The cofactor is Zn(2+).

Functionally, probable zinc metalloprotease whose natural substrate is unknown. This is Archaemetzincin from Haloarcula marismortui (strain ATCC 43049 / DSM 3752 / JCM 8966 / VKM B-1809) (Halobacterium marismortui).